The following is a 98-amino-acid chain: Cystatin-B (98 aa).

Position 1 is an N-acetylmethionine (Met1). The Secondary area of contact motif lies at 46–50 (QVVAG).

Belongs to the cystatin family. As to quaternary structure, able to form dimers stabilized by noncovalent forces.

The protein resides in the cytoplasm. It is found in the nucleus. Functionally, this is an intracellular thiol proteinase inhibitor. Tightly binding reversible inhibitor of cathepsins L, H and B. The chain is Cystatin-B (CSTB) from Pan troglodytes (Chimpanzee).